A 640-amino-acid polypeptide reads, in one-letter code: Threonine--tRNA ligase (640 aa).

One can recognise a TGS domain in the interval 1–61; the sequence is MPAITLPDGS…EHDAYVEIVT (61 aa). The tract at residues 242–533 is catalytic; sequence DHRRLGRTQD…LIEHYGGALP (292 aa). Positions 333, 384, and 510 each coordinate Zn(2+).

This sequence belongs to the class-II aminoacyl-tRNA synthetase family. In terms of assembly, homodimer. Zn(2+) serves as cofactor.

The protein resides in the cytoplasm. The enzyme catalyses tRNA(Thr) + L-threonine + ATP = L-threonyl-tRNA(Thr) + AMP + diphosphate + H(+). Catalyzes the attachment of threonine to tRNA(Thr) in a two-step reaction: L-threonine is first activated by ATP to form Thr-AMP and then transferred to the acceptor end of tRNA(Thr). Also edits incorrectly charged L-seryl-tRNA(Thr). This is Threonine--tRNA ligase from Halorhodospira halophila (strain DSM 244 / SL1) (Ectothiorhodospira halophila (strain DSM 244 / SL1)).